We begin with the raw amino-acid sequence, 1905 residues long: Low-density lipoprotein receptor-related protein 4 (1905 aa).

Residues 1–20 (MRRQWGALLLGALLCAHGLA) form the signal peptide. At 21 to 1725 (SSPECACGRS…AAPGEGLHIS (1705 aa)) the chain is on the extracellular side. 8 consecutive LDL-receptor class A domains span residues 26 to 67 (ACGR…DGCI), 70 to 106 (TCSP…QDCP), 109 to 144 (ECEE…EQCD), 147 to 183 (KCSD…ENCP), 190 to 226 (PCNL…SDCS), 230 to 266 (PCRS…RNCT), 269 to 305 (MCTA…ENCE), and 311 to 350 (QCAL…QNCR). Intrachain disulfides connect cysteine 27-cysteine 44, cysteine 34-cysteine 57, cysteine 51-cysteine 66, cysteine 71-cysteine 83, cysteine 78-cysteine 96, cysteine 90-cysteine 105, cysteine 110-cysteine 122, cysteine 117-cysteine 135, cysteine 129-cysteine 143, cysteine 148-cysteine 160, cysteine 155-cysteine 173, cysteine 167-cysteine 182, cysteine 191-cysteine 203, cysteine 198-cysteine 216, cysteine 210-cysteine 225, cysteine 231-cysteine 243, cysteine 238-cysteine 256, cysteine 250-cysteine 265, cysteine 270-cysteine 282, cysteine 277-cysteine 295, cysteine 289-cysteine 304, cysteine 312-cysteine 324, cysteine 319-cysteine 337, cysteine 331-cysteine 349, cysteine 358-cysteine 369, cysteine 365-cysteine 378, cysteine 380-cysteine 393, cysteine 399-cysteine 409, cysteine 405-cysteine 418, and cysteine 420-cysteine 433. Asparagine 264 carries N-linked (GlcNAc...) asparagine glycosylation. In terms of domain architecture, EGF-like 1; calcium-binding spans 354 to 394 (GEENCNVNNGGCAQKCQMVRGAVQCTCHTGYRLTEDGHTCQ). Positions 395–434 (DVNECAEEGYCSQGCTNSEGAFQCWCETGYELRPDRRSCK) constitute an EGF-like 2; calcium-binding domain. 5 LDL-receptor class B repeats span residues 480–522 (ELVF…DWVH), 523–565 (DKLY…HPME), 566–609 (GTIY…DYAG), 610–652 (RRMY…FEDS), and 653–693 (LYWT…LHPQ). An N-linked (GlcNAc...) asparagine glycan is attached at asparagine 498. In terms of domain architecture, EGF-like 3 spans 698–737 (GKNRCGDNNGGCTHLCLPSGQNYTCACPTGFRKISSHACA). Intrachain disulfides connect cysteine 702–cysteine 713, cysteine 709–cysteine 722, and cysteine 724–cysteine 736. N-linked (GlcNAc...) asparagine glycosylation is present at asparagine 719. LDL-receptor class B repeat units follow at residues 785 to 827 (DHVY…DWVT), 828 to 870 (NKLY…EPMG), 871 to 914 (GYMY…DYGS), 915 to 956 (QRLY…LYGE), and 957 to 998 (RIYW…FHRR). N-linked (GlcNAc...) asparagine glycosylation occurs at asparagine 901. N-linked (GlcNAc...) asparagine glycosylation is present at asparagine 1077. LDL-receptor class B repeat units follow at residues 1093-1135 (GKVY…DAIG), 1136-1178 (RKVY…YHEM), 1179-1222 (GFMY…DKAS), 1223-1263 (SQLL…LLDS), 1264-1306 (YIYW…DRAQ), 1397-1439 (GKVY…DWVA), 1440-1482 (RNLY…FPRK), 1483-1526 (GYLF…DYDT), 1527-1568 (RRIY…QDRW), and 1569-1610 (IYWT…SPQR). N-linked (GlcNAc...) asparagine glycans are attached at residues asparagine 1415 and asparagine 1467. Residues 1659–1686 (PRATGMSEKSPVLPNTPPTTLYSSTTRT) form a disordered region. Residues 1676–1686 (PTTLYSSTTRT) show a composition bias toward low complexity. The chain crosses the membrane as a helical span at residues 1726–1746 (YAIGGLLSILLILVVIAALML). Over 1747-1905 (YRHKKSKFTD…ERKLSSESQV (159 aa)) the chain is Cytoplasmic. The short motif at 1766–1769 (NPSY) is the Endocytosis signal element. The tract at residues 1852 to 1905 (ASSGSLDDTETEQLLQEEQSECSSVHTAATPERRGSLPDTGWKHERKLSSESQV) is disordered. Residues 1882–1905 (PERRGSLPDTGWKHERKLSSESQV) show a composition bias toward basic and acidic residues.

This sequence belongs to the LDLR family. Homooligomer. Interacts with MUSK; the heterodimer forms an AGRIN receptor complex that binds AGRIN resulting in activation of MUSK. Interacts (via the extracellular domain) with SOST; the interaction facilitates the inhibition of Wnt signaling. Interacts with MESD; the interaction promotes glycosylation of LRP4 and its cell-surface expression. As to expression, expressed in bone; present in osteoblasts and osteocytes. No expression is observed in osteoclast. Expressed in several regions of the brain.

It is found in the cell membrane. In terms of biological role, mediates SOST-dependent inhibition of bone formation. Functions as a specific facilitator of SOST-mediated inhibition of Wnt signaling. Plays a key role in the formation and the maintenance of the neuromuscular junction (NMJ), the synapse between motor neuron and skeletal muscle. Directly binds AGRIN and recruits it to the MUSK signaling complex. Mediates the AGRIN-induced phosphorylation of MUSK, the kinase of the complex. The activation of MUSK in myotubes induces the formation of NMJ by regulating different processes including the transcription of specific genes and the clustering of AChR in the postsynaptic membrane. Alternatively, may be involved in the negative regulation of the canonical Wnt signaling pathway, being able to antagonize the LRP6-mediated activation of this pathway. More generally, has been proposed to function as a cell surface endocytic receptor binding and internalizing extracellular ligands for degradation by lysosomes. May play an essential role in the process of digit differentiation. This Homo sapiens (Human) protein is Low-density lipoprotein receptor-related protein 4 (LRP4).